The following is a 134-amino-acid chain: Larval cuticle protein A3A (134 aa).

Repeat 1 spans residues 23 to 26; it reads AAPV. The interval 38-80 is disordered; that stretch reads DPHPQYSYGYDIQDGLTGDSKNQQETRDGDVVQGSYSLVDPDG. The region spanning 40–106 is the Chitin-binding type R&amp;R domain; it reads HPQYSYGYDI…AVVHREPLVA (67 aa). Copy 2 of the repeat occupies 111 to 114; sequence AAPA.

In terms of biological role, component of the cuticle of the larva of Tenebrio molitor. In Tenebrio molitor (Yellow mealworm beetle), this protein is Larval cuticle protein A3A.